Consider the following 393-residue polypeptide: Chalcone synthase 3 (393 aa).

Cysteine 166 is an active-site residue.

The protein belongs to the thiolase-like superfamily. Chalcone/stilbene synthases family.

The catalysed reaction is (E)-4-coumaroyl-CoA + 3 malonyl-CoA + 3 H(+) = 2',4,4',6'-tetrahydroxychalcone + 3 CO2 + 4 CoA. It participates in secondary metabolite biosynthesis; flavonoid biosynthesis. Its function is as follows. The primary product of this enzyme is 4,2',4',6'-tetrahydroxychalcone (also termed naringenin-chalcone or chalcone) which can under specific conditions spontaneously isomerize into naringenin. The protein is Chalcone synthase 3 (CHS3) of Ruta graveolens (Common rue).